Here is a 550-residue protein sequence, read N- to C-terminus: Probable acyl-activating enzyme 6 (550 aa).

It belongs to the ATP-dependent AMP-binding enzyme family. Expressed at low levels in roots, leaves, stems and developing seeds.

Its function is as follows. May act as an acid--thiol ligase that activates carboxylic acids by forming acyl-CoAs. This Arabidopsis thaliana (Mouse-ear cress) protein is Probable acyl-activating enzyme 6 (AAE6).